Consider the following 475-residue polypeptide: UDP-glycosyltransferase 76E1 (475 aa).

H19 serves as the catalytic Proton acceptor. Residue H19 participates in an anthocyanidin binding. D109 serves as the catalytic Charge relay. 8 residues coordinate UDP-alpha-D-glucose: T131, A329, Q331, H346, W349, N350, S351, and E354. A369 lines the an anthocyanidin pocket. Residues D370 and Q371 each contribute to the UDP-alpha-D-glucose site.

The protein belongs to the UDP-glycosyltransferase family. In terms of tissue distribution, expressed in flowers and fruits.

The protein localises to the cytoplasm. It localises to the nucleus. The enzyme catalyses 2-cis-(+)-abscisate + UDP-alpha-D-glucose = beta-D-glucopyranosyl cis-(+)-abscisate + UDP. In terms of biological role, glucosyltransferase acting on abscisic acid (ABA) but not on auxin (IAA). This is UDP-glycosyltransferase 76E1 from Solanum lycopersicum (Tomato).